A 156-amino-acid polypeptide reads, in one-letter code: Ribosomal RNA large subunit methyltransferase H (156 aa).

Residues leucine 73, glycine 104, and 123 to 128 (IGPLTL) contribute to the S-adenosyl-L-methionine site.

This sequence belongs to the RNA methyltransferase RlmH family. In terms of assembly, homodimer.

Its subcellular location is the cytoplasm. It carries out the reaction pseudouridine(1915) in 23S rRNA + S-adenosyl-L-methionine = N(3)-methylpseudouridine(1915) in 23S rRNA + S-adenosyl-L-homocysteine + H(+). Its function is as follows. Specifically methylates the pseudouridine at position 1915 (m3Psi1915) in 23S rRNA. The sequence is that of Ribosomal RNA large subunit methyltransferase H from Xanthomonas euvesicatoria pv. vesicatoria (strain 85-10) (Xanthomonas campestris pv. vesicatoria).